We begin with the raw amino-acid sequence, 159 residues long: Eukaryotic translation initiation factor 5A-4 (159 aa).

The segment covering Met-1–Ala-12 has biased composition (basic and acidic residues). Residues Met-1–Pro-21 form a disordered region. Lys-52 is modified (hypusine).

Belongs to the eIF-5A family. In terms of processing, lys-52 undergoes hypusination, a unique post-translational modification that consists in the addition of a butylamino group from spermidine to lysine side chain, leading to the formation of the unusual amino acid hypusine. eIF-5As are the only known proteins to undergo this modification, which is essential for their function.

Translation factor that promotes translation elongation and termination, particularly upon ribosome stalling at specific amino acid sequence contexts. Binds between the exit (E) and peptidyl (P) site of the ribosome and promotes rescue of stalled ribosome: specifically required for efficient translation of polyproline-containing peptides as well as other motifs that stall the ribosome. Acts as a ribosome quality control (RQC) cofactor by joining the RQC complex to facilitate peptidyl transfer during CAT tailing step. This is Eukaryotic translation initiation factor 5A-4 (EIF5A4) from Solanum tuberosum (Potato).